A 76-amino-acid chain; its full sequence is Acyl carrier protein (76 aa).

The Carrier domain occupies 1-74 (MFDKLKEIIA…DVVEYITEHT (74 aa)). Residue serine 34 is modified to O-(pantetheine 4'-phosphoryl)serine.

It belongs to the acyl carrier protein (ACP) family. 4'-phosphopantetheine is transferred from CoA to a specific serine of apo-ACP by AcpS. This modification is essential for activity because fatty acids are bound in thioester linkage to the sulfhydryl of the prosthetic group.

It localises to the cytoplasm. It participates in lipid metabolism; fatty acid biosynthesis. Carrier of the growing fatty acid chain in fatty acid biosynthesis. The sequence is that of Acyl carrier protein from Clostridium perfringens (strain ATCC 13124 / DSM 756 / JCM 1290 / NCIMB 6125 / NCTC 8237 / Type A).